The primary structure comprises 548 residues: Membrane protein insertase YidC (548 aa).

A helical membrane pass occupies residues 6–26 (NLLVIALLFVSFMIWQAWEQD). The interval 28-55 (NPQPQAQQTTQTTTTAAGSAADQGVPAS) is disordered. Over residues 30 to 50 (QPQAQQTTQTTTTAAGSAADQ) the composition is skewed to low complexity. 4 helical membrane-spanning segments follow: residues 350-370 (FVGNWGFSIIIITFIVRGIMY), 420-440 (LGGCFPLLIQMPIFLALYYML), 458-478 (LSAQDPYYILPILMGVTMFFI), and 499-519 (PVIFTVFFLWFPSGLVLYYIV).

This sequence belongs to the OXA1/ALB3/YidC family. Type 1 subfamily. As to quaternary structure, interacts with the Sec translocase complex via SecD. Specifically interacts with transmembrane segments of nascent integral membrane proteins during membrane integration.

The protein resides in the cell inner membrane. Functionally, required for the insertion and/or proper folding and/or complex formation of integral membrane proteins into the membrane. Involved in integration of membrane proteins that insert both dependently and independently of the Sec translocase complex, as well as at least some lipoproteins. Aids folding of multispanning membrane proteins. This chain is Membrane protein insertase YidC, found in Escherichia fergusonii (strain ATCC 35469 / DSM 13698 / CCUG 18766 / IAM 14443 / JCM 21226 / LMG 7866 / NBRC 102419 / NCTC 12128 / CDC 0568-73).